A 267-amino-acid chain; its full sequence is UPF0246 protein Dshi_3333 (267 aa).

The protein belongs to the UPF0246 family.

The protein is UPF0246 protein Dshi_3333 of Dinoroseobacter shibae (strain DSM 16493 / NCIMB 14021 / DFL 12).